Reading from the N-terminus, the 1352-residue chain is MQNEEDACLEAGYCLGTTLSSWRLHFMEEQSQSTMLMGIGIGALLTLAFVGITFFFVYRRVRRLRRAEPTPQYRFRKRDKVMFYGRKIMRKVTTLPHTLVGNTSAPRQRVRKRTKVLSLAKRILRFKKEYPTLQPKEPPPSLLEADLTEFDVKNSHLPSEVLYMLKNVRVLGHFEKPLFLELCKHMVFVQLQEGEHVFQPGEPDISIYVVQDGRLEVCIQDADGTEVVVKEVLPGDSVHSLLSILDVITGHTAPYKTVSARAAVSSTVLWLPAAAFQGVFEKYPETLVRVVQIIMVRLQRVTFLALHNYLGLTTELFNPESQAIPLLSVASVAGRAKRQMSYGPEEQLERSLRPSEFSSSDHGSSCVTVSGPLLKRSCSVPLPSNHGEVDELRQSQGSGSNTSAFQESHEGATSDLGMAYNRARILPHSDEQLGNSLASKSKKSVVAETPSAIFHYSENFRDETGACGKTDAIFRAATKDLLTLMKLDDPSLLDGRVAFLHVPAGTLVSKQGDQDVNILFVVSGMLHVYQQKIDSLEDTCLFLTHPGEMVGQLAVLTGEPLMFTIRANRDCSFLSISKAHFYEIMRKRPDVVLGVAHTVVKRMSSFVRQIDFALDWMEVEAGRAIYRQGDKSDCTYIVLSGRLRSVIRKDDGKKRLAGEYGRGDLVGVVETLTHQARATTVHAVRDSELAKLPAGALTSIKRRYPQVVTRLIHLLGEKILGSLQQGSATGHQLGFNTASSKWDLGNPPGNLSTVAALPASEDVPLTAFALELQHALSAIGPVLLLTSDNIKQRLGSAALDSIHEYRLSSWLGQQEDIHRIVLYQADGTLTPWTQRCIRQADCILIVGLGEQEPAVGELEQMLESTAVRAQKQLILLHKEDGPVPSRTVEWLNMRSWCSGHLHLCCPRRVFSKRSLPKLVEMYTRVFQRPPDRHSDFSRLARMLTGNAIALVLGGGGARGCAQVGILRALAECGVPVDIIGGTSIGAFMGALFAEERSYSQTRIRAKQWAEGMTSMMKTILDLTYPITSMFSGTGFNSSISNIFKDRQIEDLWLPYFAITTDITASAMRVHTDGSLWRYVRASMSLSGYMPPLCDPKDGHLLMDGGYINNLPADVARSMGAKVVIAIDVGSRDETDLTNYGDALSGWWLLWKRWNPLATKVKVLNMAEIQTRLAYVCCVRQLEMVKNSDYCEYLRPPIDSYRTLDFGKFDEICEVGYQHGRTVFDIWVRSGVLEKMLQDQQGTSKRKDCGVFTCPNSSFTDLAEIVSRIEPAKVAAVDDESDYQTEYEEELPAIPKETYADFQSTGIELDSDSEYEPSMLQGPPSLTSPEQSQDSFPWLPNQDDQGPRLEHPS.

The Lumenal segment spans residues 1–36 (MQNEEDACLEAGYCLGTTLSSWRLHFMEEQSQSTML). The helical transmembrane segment at 37-57 (MGIGIGALLTLAFVGITFFFV) threads the bilayer. Over 58 to 1352 (YRRVRRLRRA…DQGPRLEHPS (1295 aa)) the chain is Cytoplasmic. 170 to 297 (VLGHFEKPLF…VRVVQIIMVR (128 aa)) is an a nucleoside 3',5'-cyclic phosphate binding site. The segment at 340–364 (MSYGPEEQLERSLRPSEFSSSDHGS) is disordered. S341 and S379 each carry phosphoserine. Residues 384 to 411 (SNHGEVDELRQSQGSGSNTSAFQESHEG) are disordered. Residues 394-406 (QSQGSGSNTSAFQ) show a composition bias toward polar residues. A nucleoside 3',5'-cyclic phosphate contacts are provided by residues 499–585 (FLHV…YEIM) and 613–718 (ALDW…LGEK). Residues 681–967 (VHAVRDSELA…RGCAQVGILR (287 aa)) are involved in the binding to lipid droplets. The PNPLA domain occupies 950 to 1116 (LVLGGGGARG…INNLPADVAR (167 aa)). The short motif at 954-959 (GGGARG) is the GXGXXG element. A GXSXG motif is present at residues 981-985 (GTSIG). S983 functions as the Nucleophile in the catalytic mechanism. The Proton acceptor role is filled by D1103. Positions 1103 to 1105 (DGG) match the DGA/G motif. The residue at position 1280 (S1280) is a Phosphoserine. At T1284 the chain carries Phosphothreonine. The disordered stretch occupies residues 1295–1352 (KETYADFQSTGIELDSDSEYEPSMLQGPPSLTSPEQSQDSFPWLPNQDDQGPRLEHPS). Polar residues predominate over residues 1323–1334 (PSLTSPEQSQDS).

The protein belongs to the NTE family. As to expression, expressed in white and brown adipose tissue, cardiac muscle, skeletal muscle, and testis. In terms of tissue distribution, expressed in white adipose tissue, cardiac muscle, skeletal muscle, and testis.

The protein resides in the endoplasmic reticulum membrane. It is found in the lipid droplet. It catalyses the reaction a 1-acyl-sn-glycero-3-phosphocholine + H2O = sn-glycerol 3-phosphocholine + a fatty acid + H(+). It carries out the reaction 1-(9Z-octadecenoyl)-sn-glycero-3-phosphocholine + H2O = sn-glycerol 3-phosphocholine + (9Z)-octadecenoate + H(+). The enzyme catalyses 1-(9Z-octadecenoyl)-sn-glycero-3-phosphoethanolamine + H2O = sn-glycero-3-phosphoethanolamine + (9Z)-octadecenoate + H(+). The catalysed reaction is 1-(9Z-octadecenoyl)-sn-glycero-3-phospho-L-serine + H2O = sn-glycero-3-phospho-L-serine + (9Z)-octadecenoate + H(+). It catalyses the reaction 1-hexadecanoyl-sn-glycero-3-phosphocholine + H2O = sn-glycerol 3-phosphocholine + hexadecanoate + H(+). It carries out the reaction 1-hexadecanoyl-sn-glycero-3-phosphate + H2O = sn-glycerol 3-phosphate + hexadecanoate + H(+). Its activity is regulated as follows. cAMP does not regulate lysophospholipase activity in vitro. Slightly inhibited by organophosphorus (OP) compounds such as mipafox, which is likely why mice are less sensitive to distal axonophathy induced by OPs compared to humans. Lysophospholipase which preferentially deacylates unsaturated lysophosphatidylcholine (C18:1), generating glycerophosphocholine. Can also deacylate, to a lesser extent, lysophosphatidylethanolamine (C18:1), lysophosphatidyl-L-serine (C18:1) and lysophosphatidic acid (C16:0). Its function is as follows. Lysophospholipase. Functionally, lacks lysophospholipase activity. The chain is Patatin-like phospholipase domain-containing protein 7 (Pnpla7) from Mus musculus (Mouse).